A 150-amino-acid polypeptide reads, in one-letter code: 15 kDa calcium-binding protein (150 aa).

At Ala1 the chain carries N-acetylalanine. EF-hand domains lie at 7–42 (TDAEKAEFKFGFKSKDGDNSITAKELGEFLESAGKS), 43–78 (FSEEQLAQMISDVDTDKSGTIEFSEMLMGIAEKMMK), 81–116 (WKKSHFQKAFDDMDKDGNGVLSPEELHLAMSTRIEP), and 118–150 (MSKEAIDAIIAKADCDGDGKINRKEFVKLIKSS). The Ca(2+) site is built by Asp22, Asp24, Ser26, Thr28, Asp56, Asp58, Ser60, Thr62, Glu67, Asp94, Asp96, Asn98, Glu105, Asp131, Asp133, Asp135, Lys137, and Glu142.

The protein localises to the nucleus. The protein resides in the cytoplasm. It is found in the cytoskeleton. Its subcellular location is the spindle. Functionally, may play an important role in mitosis of sea urchin egg. May function as a Ca(2+)-dependent intracellular modulator of microtubule assembly. The protein is 15 kDa calcium-binding protein of Hemicentrotus pulcherrimus (Sea urchin).